Reading from the N-terminus, the 137-residue chain is Large ribosomal subunit protein uL16 (137 aa).

Belongs to the universal ribosomal protein uL16 family. Part of the 50S ribosomal subunit.

Binds 23S rRNA and is also seen to make contacts with the A and possibly P site tRNAs. This is Large ribosomal subunit protein uL16 from Rhizobium rhizogenes (strain K84 / ATCC BAA-868) (Agrobacterium radiobacter).